The following is a 1251-amino-acid chain: Phospholipid-transporting ATPase IC (1251 aa).

The tract at residues 1-54 (MSTERDSETTFDEDSQPNDEVVPYSDDETEDELDDQGSAVEPEQNRVNREAEEN) is disordered. Over 1-108 (MSTERDSETT…TYKYNAFTFI (108 aa)) the chain is Cytoplasmic. Residues 25-35 (SDDETEDELDD) are compositionally biased toward acidic residues. The segment covering 43–54 (EQNRVNREAEEN) has biased composition (basic and acidic residues). Residues 109-130 (PMNLFEQFKRAANLYFLALLIL) traverse the membrane as a helical segment. At 131–136 (QAVPQI) the chain is on the exoplasmic loop side. Residues 137–156 (STLAWYTTLVPLLVVLGVTA) traverse the membrane as a helical segment. Over 157–340 (IKDLVDDVAR…TKIDYLMNYM (184 aa)) the chain is Cytoplasmic. Residues 341–362 (VYTIFVVLILLSAGLAIGHAYW) form a helical membrane-spanning segment. The Exoplasmic loop segment spans residues 363 to 389 (EAQVGNSSWYLYDGEDDTPSYRGFLIF). The chain crosses the membrane as a helical span at residues 390-411 (WGYIIVLNTMVPISLYVSVEVI). Topologically, residues 412-949 (RLGQSHFINW…GRWSYIRMCK (538 aa)) are cytoplasmic. Catalysis depends on Asp454, which acts as the 4-aspartylphosphate intermediate. The ATP site is built by Asp454, Lys455, Thr456, Glu555, Phe596, Lys619, Arg652, Thr732, Gly733, Asp734, Arg867, and Lys873. A Mg(2+)-binding site is contributed by Asp454. Thr456 contributes to the Mg(2+) binding site. Asp893 contacts Mg(2+). The ATP site is built by Asn896 and Asp897. Asp897 contacts Mg(2+). A helical transmembrane segment spans residues 950-970 (FLRYFFYKNFAFTLVHFWYSF). Residues 971–982 (FNGYSAQTAYED) are Exoplasmic loop-facing. Residues 983–1002 (WFITLYNVLYTSLPVLLMGL) traverse the membrane as a helical segment. Residues 1003 to 1032 (LDQDVSDKLSLRFPGLYIVGQRDLLFNYKR) are Cytoplasmic-facing. A helical membrane pass occupies residues 1033-1054 (FFVSLLHGVLTSMILFFIPLGA). Over 1055–1068 (YLQTVGQDGEAPSD) the chain is Exoplasmic loop. A helical membrane pass occupies residues 1069–1091 (YQSFAVTIASALVITVNFQIGLD). Topologically, residues 1092–1097 (TSYWTF) are cytoplasmic. The helical transmembrane segment at 1098–1118 (VNAFSIFGSIALYFGIMFDFH) threads the bilayer. Residues 1119–1138 (SAGIHVLFPSAFQFTGTASN) are Exoplasmic loop-facing. Residues 1139 to 1163 (ALRQPYIWLTIILAVAVCLLPVVAI) traverse the membrane as a helical segment. Topologically, residues 1164-1251 (RFLSMTIWPS…TAEYRRTGDS (88 aa)) are cytoplasmic. Ser1223 is modified (phosphoserine).

The protein belongs to the cation transport ATPase (P-type) (TC 3.A.3) family. Type IV subfamily. Component of a P4-ATPase flippase complex which consists of a catalytic alpha subunit ATP8B1 and an accessory beta subunit TMEM30A. The flippase ATP8B1:TMEM30A complex can form an intermediate phosphoenzyme in vitro. Also interacts with beta subunit TMEM30B. Mg(2+) is required as a cofactor. In terms of tissue distribution, found in most tissues except brain and skeletal muscle. Most abundant in pancreas and small intestine.

It is found in the cell membrane. Its subcellular location is the apical cell membrane. The protein localises to the cell projection. It localises to the stereocilium. The protein resides in the endoplasmic reticulum. It is found in the golgi apparatus. The catalysed reaction is ATP + H2O + phospholipidSide 1 = ADP + phosphate + phospholipidSide 2.. It carries out the reaction a 1,2-diacyl-sn-glycero-3-phosphocholine(out) + ATP + H2O = a 1,2-diacyl-sn-glycero-3-phosphocholine(in) + ADP + phosphate + H(+). The enzyme catalyses a 1,2-diacyl-sn-glycero-3-phospho-L-serine(out) + ATP + H2O = a 1,2-diacyl-sn-glycero-3-phospho-L-serine(in) + ADP + phosphate + H(+). Functionally, catalytic component of a P4-ATPase flippase complex which catalyzes the hydrolysis of ATP coupled to the transport of phospholipids, in particular phosphatidylcholines (PC), from the outer to the inner leaflet of the plasma membrane. May participate in the establishment of the canalicular membrane integrity by ensuring asymmetric distribution of phospholipids in the canicular membrane. Thus may have a role in the regulation of bile acids transport into the canaliculus, uptake of bile acids from intestinal contents into intestinal mucosa or both and protect hepatocytes from bile salts. Involved in the microvillus formation in polarized epithelial cells; the function seems to be independent from its flippase activity. Participates in correct apical membrane localization of CDC42, CFTR and SLC10A2. Enables CDC42 clustering at the apical membrane during enterocyte polarization through the interaction between CDC42 polybasic region and negatively charged membrane lipids provided by ATP8B1. Together with TMEM30A is involved in uptake of the synthetic drug alkylphospholipid perifosine. Required for the preservation of cochlear hair cells in the inner ear. May act as cardiolipin transporter during inflammatory injury. This Homo sapiens (Human) protein is Phospholipid-transporting ATPase IC.